Reading from the N-terminus, the 97-residue chain is Small ribosomal subunit protein bS6 (97 aa).

Belongs to the bacterial ribosomal protein bS6 family.

In terms of biological role, binds together with bS18 to 16S ribosomal RNA. This is Small ribosomal subunit protein bS6 from Listeria monocytogenes serotype 4b (strain CLIP80459).